Reading from the N-terminus, the 374-residue chain is DNA replication and repair protein RecF (374 aa).

Position 30 to 37 (30 to 37 (GNNAQGKS)) interacts with ATP.

The protein belongs to the RecF family.

The protein resides in the cytoplasm. Functionally, the RecF protein is involved in DNA metabolism; it is required for DNA replication and normal SOS inducibility. RecF binds preferentially to single-stranded, linear DNA. It also seems to bind ATP. The sequence is that of DNA replication and repair protein RecF from Nostoc punctiforme (strain ATCC 29133 / PCC 73102).